Consider the following 518-residue polypeptide: Arrestin-related trafficking adapter 10 (518 aa).

A Glycyl lysine isopeptide (Lys-Gly) (interchain with G-Cter in ubiquitin) cross-link involves residue Lys118.

This sequence belongs to the ART10 family. In terms of assembly, interacts with RSP5. Ubiquitinated by RSP5.

The protein resides in the cytoplasm. May regulate endocytosis by recruiting RSP5 ubiquitin ligase activity to specific plasma membrane proteins in response to extracellular stimuli. The polypeptide is Arrestin-related trafficking adapter 10 (ART10) (Saccharomyces cerevisiae (strain YJM789) (Baker's yeast)).